The primary structure comprises 122 residues: Large ribosomal subunit protein eL8 (122 aa).

This sequence belongs to the eukaryotic ribosomal protein eL8 family. As to quaternary structure, part of the 50S ribosomal subunit. Probably part of the RNase P complex.

Its subcellular location is the cytoplasm. Functionally, multifunctional RNA-binding protein that recognizes the K-turn motif in ribosomal RNA, the RNA component of RNase P, box H/ACA, box C/D and box C'/D' sRNAs. The sequence is that of Large ribosomal subunit protein eL8 from Methanothrix thermoacetophila (strain DSM 6194 / JCM 14653 / NBRC 101360 / PT) (Methanosaeta thermophila).